The primary structure comprises 398 residues: Elongation factor Tu (398 aa).

One can recognise a tr-type G domain in the interval Lys-10–Glu-207. The interval Gly-19–Thr-26 is G1. Gly-19 to Thr-26 contributes to the GTP binding site. Thr-26 contacts Mg(2+). The interval Gly-63 to Asn-67 is G2. The segment at Asp-84–Gly-87 is G3. Residues Asp-84–His-88 and Asn-139–Asp-142 contribute to the GTP site. Residues Asn-139–Asp-142 are G4. The tract at residues Ser-177–Leu-179 is G5.

The protein belongs to the TRAFAC class translation factor GTPase superfamily. Classic translation factor GTPase family. EF-Tu/EF-1A subfamily. In terms of assembly, monomer.

The protein localises to the cytoplasm. The catalysed reaction is GTP + H2O = GDP + phosphate + H(+). Its function is as follows. GTP hydrolase that promotes the GTP-dependent binding of aminoacyl-tRNA to the A-site of ribosomes during protein biosynthesis. This chain is Elongation factor Tu, found in Streptococcus equi subsp. zooepidemicus (strain MGCS10565).